The primary structure comprises 347 residues: Globoside alpha-1,3-N-acetylgalactosaminyltransferase 1 (347 aa).

Residues 1-6 lie on the Cytoplasmic side of the membrane; sequence MTRPRL. The chain crosses the membrane as a helical; Signal-anchor for type II membrane protein span at residues 7 to 27; the sequence is AQGLAFFLLGGTGLWVLWKFI. Topologically, residues 28–347 are lumenal; the sequence is KDWLLVSYIP…VKKNANWLRT (320 aa). N108 carries an N-linked (GlcNAc...) asparagine glycan. Residues 116-121, 206-208, and 228-231 contribute to the substrate site; these read FAVGKY, DVD, and HPGY. Positions 206 and 208 each coordinate Mn(2+). The Nucleophile role is filled by E298.

The protein belongs to the glycosyltransferase 6 family. Mn(2+) is required as a cofactor.

The protein resides in the golgi apparatus membrane. The enzyme catalyses a globoside Gb4Cer (d18:1(4E)) + UDP-N-acetyl-alpha-D-galactosamine = a globoside Forssman (d18:1(4E)) + UDP + H(+). The catalysed reaction is a globoside Gb4Cer + UDP-N-acetyl-alpha-D-galactosamine = a globoside IV3GalNAc-Gb4Cer + UDP + H(+). Its pathway is protein modification; protein glycosylation. In terms of biological role, catalyzes the formation of Forssman glycolipid via the addition of N-acetylgalactosamine (GalNAc) in alpha-1,3-linkage to GalNAcb-1,3Gala-1,4Galb-1,4GlcCer (Gb4Cer). Forssman glycolipid (also called Forssman antigen; FG) probably serves for adherence of some pathogens. Conversely, it diminishes Shiga toxins susceptibility. In Mus musculus (Mouse), this protein is Globoside alpha-1,3-N-acetylgalactosaminyltransferase 1.